We begin with the raw amino-acid sequence, 338 residues long: Lipoate-protein ligase A (338 aa).

Residues 29–216 (PATQRVLFLW…AFFAHYGERV (188 aa)) form the BPL/LPL catalytic domain. ATP is bound by residues Arg71, 76–79 (GAVF), and Lys134. Residue Lys134 coordinates (R)-lipoate.

The protein belongs to the LplA family. Monomer.

Its subcellular location is the cytoplasm. The enzyme catalyses L-lysyl-[lipoyl-carrier protein] + (R)-lipoate + ATP = N(6)-[(R)-lipoyl]-L-lysyl-[lipoyl-carrier protein] + AMP + diphosphate + H(+). Its pathway is protein modification; protein lipoylation via exogenous pathway; protein N(6)-(lipoyl)lysine from lipoate: step 1/2. It functions in the pathway protein modification; protein lipoylation via exogenous pathway; protein N(6)-(lipoyl)lysine from lipoate: step 2/2. Its function is as follows. Catalyzes both the ATP-dependent activation of exogenously supplied lipoate to lipoyl-AMP and the transfer of the activated lipoyl onto the lipoyl domains of lipoate-dependent enzymes. In Escherichia coli O9:H4 (strain HS), this protein is Lipoate-protein ligase A.